A 1119-amino-acid polypeptide reads, in one-letter code: Nuclear matrix constituent protein 1 (1119 aa).

2 coiled-coil regions span residues 140 to 226 (LAEL…LYQQ) and 328 to 488 (LQNR…LDER). Disordered regions lie at residues 846–884 (LDVE…AEEA), 903–974 (LASA…PTGR), 989–1015 (NGAL…EIPD), and 1046–1109 (GINA…EVSM). Composition is skewed to basic residues over residues 859-876 (GNRK…RKRS) and 920-929 (KRTRNSRKRN). Over residues 1075–1085 (TPEQSRGYQNQ) the composition is skewed to polar residues.

It belongs to the CRWN family.

It localises to the nucleus matrix. It is found in the nucleus lamina. Functionally, architectural component of nuclear structure that plays different roles in controlling nuclear size and morphology. This is Nuclear matrix constituent protein 1 from Daucus carota subsp. sativus (Carrot).